Here is a 500-residue protein sequence, read N- to C-terminus: Probable cytosol aminopeptidase (500 aa).

Positions 265 and 270 each coordinate Mn(2+). The active site involves Lys-277. Positions 288, 347, and 349 each coordinate Mn(2+). Residue Arg-351 is part of the active site.

The protein belongs to the peptidase M17 family. The cofactor is Mn(2+).

The protein localises to the cytoplasm. The enzyme catalyses Release of an N-terminal amino acid, Xaa-|-Yaa-, in which Xaa is preferably Leu, but may be other amino acids including Pro although not Arg or Lys, and Yaa may be Pro. Amino acid amides and methyl esters are also readily hydrolyzed, but rates on arylamides are exceedingly low.. It catalyses the reaction Release of an N-terminal amino acid, preferentially leucine, but not glutamic or aspartic acids.. Presumably involved in the processing and regular turnover of intracellular proteins. Catalyzes the removal of unsubstituted N-terminal amino acids from various peptides. The polypeptide is Probable cytosol aminopeptidase (Rickettsia massiliae (strain Mtu5)).